We begin with the raw amino-acid sequence, 289 residues long: Heme oxygenase 1 (289 aa).

The Cytoplasmic portion of the chain corresponds to 1-266 (MERPQLDSMS…SQISTSSSQT (266 aa)). The heme b site is built by Lys-18, His-25, Tyr-134, and Arg-183. Residues 225-261 (HKDQSPSQTEFLRQRPASLVQDTTSAETPRGKSQIST) are disordered. Residues Ser-229 and Ser-242 each carry the phosphoserine modification. Residues 244–261 (VQDTTSAETPRGKSQIST) are compositionally biased toward polar residues. A helical; Anchor for type IV membrane protein membrane pass occupies residues 267 to 289 (PLLRWVLTLSFLLATVAVGIYAM).

It belongs to the heme oxygenase family. Homodimer and higher order homooligomer. Oligomerization is crucial for its stability and function in the endoplasmic reticulum. Interacts with FLVCR2; this interaction is potentiated in the presence of heme. In terms of processing, a soluble form arises by proteolytic removal of the membrane anchor.

It is found in the endoplasmic reticulum membrane. It catalyses the reaction heme b + 3 reduced [NADPH--hemoprotein reductase] + 3 O2 = biliverdin IXalpha + CO + Fe(2+) + 3 oxidized [NADPH--hemoprotein reductase] + 3 H2O + H(+). Its activity is regulated as follows. Inhibited by metalloporphyrins such as Sn- and Zn-protoporphyrins. In terms of biological role, catalyzes the oxidative cleavage of heme at the alpha-methene bridge carbon, released as carbon monoxide (CO), to generate biliverdin IXalpha, while releasing the central heme iron chelate as ferrous iron. Affords protection against programmed cell death and this cytoprotective effect relies on its ability to catabolize free heme and prevent it from sensitizing cells to undergo apoptosis. Its function is as follows. Catalyzes the oxidative cleavage of heme at the alpha-methene bridge carbon, released as carbon monoxide (CO), to generate biliverdin IXalpha, while releasing the central heme iron chelate as ferrous iron. This Rattus norvegicus (Rat) protein is Heme oxygenase 1 (Hmox1).